Consider the following 185-residue polypeptide: Potassium-transporting ATPase KdpC subunit (185 aa).

Residues 14 to 34 (ALSLLTGVAYPLALTGIAAVI) form a helical membrane-spanning segment.

The protein belongs to the KdpC family. In terms of assembly, the system is composed of three essential subunits: KdpA, KdpB and KdpC.

It localises to the cell inner membrane. Part of the high-affinity ATP-driven potassium transport (or Kdp) system, which catalyzes the hydrolysis of ATP coupled with the electrogenic transport of potassium into the cytoplasm. This subunit acts as a catalytic chaperone that increases the ATP-binding affinity of the ATP-hydrolyzing subunit KdpB by the formation of a transient KdpB/KdpC/ATP ternary complex. The polypeptide is Potassium-transporting ATPase KdpC subunit (Cereibacter sphaeroides (strain ATCC 17023 / DSM 158 / JCM 6121 / CCUG 31486 / LMG 2827 / NBRC 12203 / NCIMB 8253 / ATH 2.4.1.) (Rhodobacter sphaeroides)).